Reading from the N-terminus, the 353-residue chain is N-methyltransferase (353 aa).

S-adenosyl-L-homocysteine-binding residues include Ser-171, Ala-195, Asp-218, Asp-238, and Lys-252. Residue Asp-218 participates in S-adenosyl-L-methionine binding.

The protein belongs to the class I-like SAM-binding methyltransferase superfamily. Cation-independent O-methyltransferase family. Homodimer. In terms of tissue distribution, expressed at high levels in all tissues.

It catalyses the reaction 3-methoxytyramine + S-adenosyl-L-methionine = N-methyl-3-methoxytyramine + S-adenosyl-L-homocysteine + H(+). It carries out the reaction mescaline + S-adenosyl-L-methionine = N-methylmescaline + S-adenosyl-L-homocysteine + H(+). The catalysed reaction is tyramine + S-adenosyl-L-methionine = N-methyltyramine + S-adenosyl-L-homocysteine + H(+). The enzyme catalyses 4-hydroxy-3,5-dimethoxyphenethylamine + S-adenosyl-L-methionine = N-methyl-4-hydroxy-3,5-dimethoxyphenethylamine + S-adenosyl-L-homocysteine + H(+). Its pathway is aromatic compound metabolism. It participates in alkaloid biosynthesis. Its function is as follows. N-methyltransferase participating in the biosynthesis of natural products derived from phenylethylamine, including mescaline, a natural hallucinogen potentially used in psychotherapeutic treatments. Catalyzes the N-methylation of many substrates, including 3-methoxytyramine, 5-hydroxy-3,4-dimethoxyphenethylamine, 4-hydroxy-3,5-dimethoxyphenethylamine, tyramine and mescaline. The chain is N-methyltransferase from Lophophora williamsii (Peyote).